The chain runs to 278 residues: Probable cytochrome c oxidase subunit 3 (278 aa).

The next 6 helical transmembrane spans lie at proline 21–methionine 41, phenylalanine 46–tryptophan 66, isoleucine 89–phenylalanine 109, cysteine 174–tyrosine 194, phenylalanine 212–valine 232, and alanine 256–leucine 276.

This sequence belongs to the cytochrome c oxidase subunit 3 family.

The protein resides in the cell membrane. The catalysed reaction is 4 Fe(II)-[cytochrome c] + O2 + 8 H(+)(in) = 4 Fe(III)-[cytochrome c] + 2 H2O + 4 H(+)(out). This Rickettsia prowazekii (strain Madrid E) protein is Probable cytochrome c oxidase subunit 3 (ctaE).